The sequence spans 1372 residues: Serine protease pic autotransporter (1372 aa).

The signal sequence occupies residues 1–55 (MNKVYSLKYCPVTGGLIAVSELARRVIKKTCRRLTHILLAGIPAICLCYSQISQA). Positions 56 to 301 (GIVRSDIAYQ…NVIPTDYLNQ (246 aa)) constitute a Peptidase S6 domain. Residues His127, Asp155, and Ser258 each act as charge relay system in the active site. The region spanning 1106-1372 (DTNGDAGAWA…AVNANFRYMF (267 aa)) is the Autotransporter domain.

Cleaved to release the mature protein from the outer membrane.

Its subcellular location is the periplasm. It localises to the secreted. The protein resides in the cell surface. It is found in the cell outer membrane. In terms of biological role, involved in intestinal colonization, displays in vitro mucinolytic activity, serum resistance, and hemagglutination. Important to penetrate the intestinal mucus layer. The protein is Serine protease pic autotransporter (pic) of Escherichia coli O44:H18 (strain 042 / EAEC).